The following is a 470-amino-acid chain: Glucose-1-phosphate adenylyltransferase (470 aa).

Residues Gly-165, 182–183 (EK), and Ser-200 each bind alpha-D-glucose 1-phosphate.

It belongs to the bacterial/plant glucose-1-phosphate adenylyltransferase family. Homotetramer.

The catalysed reaction is alpha-D-glucose 1-phosphate + ATP + H(+) = ADP-alpha-D-glucose + diphosphate. The protein operates within glycan biosynthesis; glycogen biosynthesis. In terms of biological role, involved in the biosynthesis of ADP-glucose, a building block required for the elongation reactions to produce glycogen. Catalyzes the reaction between ATP and alpha-D-glucose 1-phosphate (G1P) to produce pyrophosphate and ADP-Glc. The sequence is that of Glucose-1-phosphate adenylyltransferase from Paenarthrobacter aurescens (strain TC1).